Here is a 263-residue protein sequence, read N- to C-terminus: 3-methyl-2-oxobutanoate hydroxymethyltransferase (263 aa).

Mg(2+) contacts are provided by aspartate 45 and aspartate 84. Residues 45–46 (DS), aspartate 84, and lysine 112 contribute to the 3-methyl-2-oxobutanoate site. Glutamate 114 is a binding site for Mg(2+). The Proton acceptor role is filled by glutamate 181.

The protein belongs to the PanB family. Homodecamer; pentamer of dimers. Mg(2+) serves as cofactor.

Its subcellular location is the cytoplasm. It catalyses the reaction 3-methyl-2-oxobutanoate + (6R)-5,10-methylene-5,6,7,8-tetrahydrofolate + H2O = 2-dehydropantoate + (6S)-5,6,7,8-tetrahydrofolate. The protein operates within cofactor biosynthesis; (R)-pantothenate biosynthesis; (R)-pantoate from 3-methyl-2-oxobutanoate: step 1/2. Catalyzes the reversible reaction in which hydroxymethyl group from 5,10-methylenetetrahydrofolate is transferred onto alpha-ketoisovalerate to form ketopantoate. This is 3-methyl-2-oxobutanoate hydroxymethyltransferase from Buchnera aphidicola subsp. Acyrthosiphon pisum (strain 5A).